We begin with the raw amino-acid sequence, 462 residues long: Amino-acid permease AapA (462 aa).

12 helical membrane-spanning segments follow: residues 27 to 47 (LMAI…KSIH), 48 to 68 (FAGP…FFIM), 96 to 116 (AAFI…MADL), 134 to 154 (LPGL…VKLF), 160 to 180 (WFAL…ILLI), 209 to 229 (GFIL…LVGL), 252 to 272 (ILLF…WNVL), 279 to 299 (FVQV…NFVV), 343 to 363 (ALFF…LMPE), 366 to 386 (FTLI…ITVI), 410 to 430 (PLSN…LALA), and 435 to 455 (IALF…KVQT).

The protein belongs to the amino acid-polyamine-organocation (APC) superfamily.

It is found in the cell membrane. Functionally, probable amino-acid or metabolite transport protein. This is Amino-acid permease AapA (aapA) from Bacillus subtilis (strain 168).